The following is a 260-amino-acid chain: Indole-3-glycerol phosphate synthase (260 aa).

The protein belongs to the TrpC family.

The catalysed reaction is 1-(2-carboxyphenylamino)-1-deoxy-D-ribulose 5-phosphate + H(+) = (1S,2R)-1-C-(indol-3-yl)glycerol 3-phosphate + CO2 + H2O. It functions in the pathway amino-acid biosynthesis; L-tryptophan biosynthesis; L-tryptophan from chorismate: step 4/5. The protein is Indole-3-glycerol phosphate synthase of Staphylococcus aureus (strain COL).